The sequence spans 54 residues: Large ribosomal subunit protein bL33 (54 aa).

It belongs to the bacterial ribosomal protein bL33 family.

The sequence is that of Large ribosomal subunit protein bL33 from Symbiobacterium thermophilum (strain DSM 24528 / JCM 14929 / IAM 14863 / T).